A 430-amino-acid polypeptide reads, in one-letter code: Putative membrane fusion protein SilB (430 aa).

The N-terminal stretch at 1 to 28 (MASLKIKYAAIIISSLIAGGLISVTAWQ) is a signal peptide. The interval 407–430 (RHPEKTENSMPAMSEQPVNMHSGH) is disordered. Residues 414-430 (NSMPAMSEQPVNMHSGH) show a composition bias toward polar residues.

The protein belongs to the membrane fusion protein (MFP) (TC 8.A.1) family.

In terms of biological role, component of the sil cation efflux system that confers resistance to silver. May be part of a three-component cation/proton antiporter. In Salmonella typhimurium, this protein is Putative membrane fusion protein SilB (silB).